Here is a 908-residue protein sequence, read N- to C-terminus: DNA (cytosine-5)-methyltransferase 3A (908 aa).

Residues 1-13 (MPSSGPGDTSSSS) show a composition bias toward low complexity. Disordered regions lie at residues 1–183 (MPSS…PMPR) and 226–281 (NQAS…PEYE). The span at 14–37 (LEREDDRKEGEEQEENRGKEERQE) shows a compositional bias: basic and acidic residues. Over residues 44–54 (KVGRPGRKRKH) the composition is skewed to basic residues. Positions 69 to 80 (TTKSQPMAQDSG) are enriched in polar residues. The residue at position 102 (Ser102) is a Phosphoserine. Residues 110–124 (GAPAEGEGTETPPEA) show a composition bias toward low complexity. Residue Thr120 is modified to Phosphothreonine. Lys158 participates in a covalent cross-link: Glycyl lysine isopeptide (Lys-Gly) (interchain with G-Cter in SUMO2). At Arg167 the chain carries Omega-N-methylarginine. The interval 195–399 (SKRKRDEWLA…DSGKAVEVQN (205 aa)) is interaction with DNMT1 and DNMT3B. A phosphoserine mark is found at Ser239 and Ser251. Polar residues predominate over residues 242-256 (AVQQPTDPASPTVAT). Thr257 is modified (phosphothreonine). Over residues 265-275 (AGDKNATKAAD) the composition is skewed to basic and acidic residues. In terms of domain architecture, PWWP spans 288-346 (IGELVWGKLRGFSWWPGRIVSWWMTGRSRAAEGTRWVMWFGDGKFSVVCVEKLMPLSSF). 2 positions are modified to phosphoserine: Ser386 and Ser389. Residues 443 to 462 (AYAPPPPAKKPRKSTTEKPK) are disordered. The region spanning 478 to 610 (EVRQKCRNIE…LQMFFANNHD (133 aa)) is the ADD domain. Residues 489–519 (ICISCGSLNVTLEHPLFIGGMCQNCKNCFLE) form a GATA-type; atypical zinc finger. The tract at residues 490–582 (CISCGSLNVT…KEDPWNCYMC (93 aa)) is interaction with the PRC2/EED-EZH2 complex. The PHD-type; atypical zinc-finger motif lies at 530–586 (QSYCTICCGGREVLMCGNNNCCRCFCVECVDLLVGPGAAQAAIKEDPWNCYMCGHKG). In terms of domain architecture, SAM-dependent MTase C5-type spans 630 to 908 (IRVLSLFDGI…APLKEYFACV (279 aa)). Residues 637–641 (DGIAT), Glu660, and 682–684 (DVR) contribute to the S-adenosyl-L-methionine site. Cys706 is an active-site residue. At Cys706 the chain carries S-methylcysteine; by autocatalysis. 887 to 889 (RSW) is a binding site for S-adenosyl-L-methionine.

The protein belongs to the class I-like SAM-binding methyltransferase superfamily. C5-methyltransferase family. As to quaternary structure, heterotetramer composed of 1 DNMT3A homodimer and 2 DNMT3L subunits (DNMT3L-DNMT3A-DNMT3A-DNMT3L). Interacts with DNMT1 and DNMT3B. Interacts with MPHOSPH8. Interacts with histone H3 that is not methylated at 'Lys-4' (H3K4). Binds the ZBTB18 transcriptional repressor. Interacts with SETDB1. Associates with HDAC1 through its ADD domain. Interacts with UHRF1. Interacts with the PRC2/EED-EZH2 complex. Interacts with UBC9, PIAS1 and PIAS2. Interacts with SPOCD1. Interacts with ZNF263; recruited to the SIX3 promoter along with other proteins involved in chromatin modification and transcriptional corepression where it contributes to transcriptional repression. Auto-methylated at Cys-706: auto-methylation takes place in absence of DNA substrate and inactivates the DNA methyltransferase activity. Inactivation by auto-methylation may be used to inactivate unused DNA methyltransferases in the cell. In terms of processing, sumoylated; sumoylation disrupts the ability to interact with histone deacetylases (HDAC1 and HDAC2) and repress transcription. Isoform 1 is expressed ubiquitously at low levels. Expression of isoform 2 is restricted to tissues containing cells which are undergoing active de novo methylation, including spleen, testis and thymus.

Its subcellular location is the nucleus. The protein localises to the chromosome. It localises to the cytoplasm. It catalyses the reaction a 2'-deoxycytidine in DNA + S-adenosyl-L-methionine = a 5-methyl-2'-deoxycytidine in DNA + S-adenosyl-L-homocysteine + H(+). The enzyme catalyses L-cysteinyl-[protein] + S-adenosyl-L-methionine = S-methyl-L-cysteinyl-[protein] + S-adenosyl-L-homocysteine + H(+). With respect to regulation, activated by binding to the regulatory factor DNMT3L. Auto-methylation at Cys-706 in absence of DNA inactivates the DNA methyltransferase activity. Functionally, required for genome-wide de novo methylation and is essential for the establishment of DNA methylation patterns during development. DNA methylation is coordinated with methylation of histones. It modifies DNA in a non-processive manner and also methylates non-CpG sites. May preferentially methylate DNA linker between 2 nucleosomal cores and is inhibited by histone H1. Plays a role in paternal and maternal imprinting. Required for methylation of most imprinted loci in germ cells. Acts as a transcriptional corepressor for ZBTB18. Recruited to trimethylated 'Lys-36' of histone H3 (H3K36me3) sites. Can actively repress transcription through the recruitment of HDAC activity. Also has weak auto-methylation activity on Cys-706 in absence of DNA. This chain is DNA (cytosine-5)-methyltransferase 3A, found in Mus musculus (Mouse).